The following is a 191-amino-acid chain: MAAERERGGRERSREREERDSEFVDKLVHINRVAKVVKGGKRFGFAALVVVGDQKGRVGFGHGKAREVPEAIRKATESAKRNLTRVALREGRTLHHDIAGRHGAGRVYLRAAPAGTGIIAGGPMRAVFETLGIADVVAKSVGSSNPYNMVRATFDALKHLDSPRSVAARRNIKVSTLQARRVGGDAEVVAE.

Residues 1–21 are disordered; sequence MAAERERGGRERSREREERDS. In terms of domain architecture, S5 DRBM spans 23–86; sequence FVDKLVHINR…ESAKRNLTRV (64 aa).

As to quaternary structure, part of the 30S ribosomal subunit. Contacts proteins S4 and S8.

With S4 and S12 plays an important role in translational accuracy. Its function is as follows. Located at the back of the 30S subunit body where it stabilizes the conformation of the head with respect to the body. This chain is Small ribosomal subunit protein uS5, found in Rhodopseudomonas palustris (strain ATCC BAA-98 / CGA009).